The chain runs to 309 residues: DnaJ protein ERDJ7 (309 aa).

The signal sequence occupies residues 1–36; that stretch reads MSQVGSAGEGSNSMAAAPPPRLLLLVVLLLVPVSNA. Over 37–130 the chain is Lumenal; that stretch reads IYCEEDDCYD…YRAYYGHKTD (94 aa). Residues 43–107 enclose the J domain; it reads DCYDLLGVKQ…STRGQYDYAI (65 aa). N-linked (GlcNAc...) asparagine glycosylation occurs at Asn-55. Residues 131-151 form a helical membrane-spanning segment; it reads PRAVLIGLLLIISAFQYLNQF. Topologically, residues 152-219 are cytoplasmic; the sequence is GRYSKAIETV…GVEKPSLWRL (68 aa). The chain crosses the membrane as a helical span at residues 220–242; sequence YGVQFILLPYSIGKVLSWKFCWF. At 243 to 309 the chain is on the lumenal side; that stretch reads WRYRIKKLPY…EMRKESKRRR (67 aa).

It localises to the endoplasmic reticulum membrane. In terms of biological role, may play a role in protein folding in the endoplasmic reticulum. The polypeptide is DnaJ protein ERDJ7 (Oryza sativa subsp. japonica (Rice)).